Here is a 118-residue protein sequence, read N- to C-terminus: Evasin P546 (118 aa).

Positions 1-21 are cleaved as a signal peptide; it reads MKVLLYIAASCLMLLALNVSA. Intrachain disulfides connect cysteine 38–cysteine 59, cysteine 55–cysteine 96, cysteine 72–cysteine 101, and cysteine 91–cysteine 110. Asparagine 45 is a glycosylation site (N-linked (GlcNAc...) asparagine).

The protein localises to the secreted. Functionally, salivary chemokine-binding protein which binds to host chemokines CCL1, CCL3, CCL5 and CCL22. The protein is Evasin P546 of Amblyomma cajennense (Cayenne tick).